The primary structure comprises 429 residues: Glutamate-1-semialdehyde 2,1-aminomutase (429 aa).

Residue Lys-268 is modified to N6-(pyridoxal phosphate)lysine.

Belongs to the class-III pyridoxal-phosphate-dependent aminotransferase family. HemL subfamily. Homodimer. Pyridoxal 5'-phosphate serves as cofactor.

The protein localises to the cytoplasm. It catalyses the reaction (S)-4-amino-5-oxopentanoate = 5-aminolevulinate. Its pathway is porphyrin-containing compound metabolism; protoporphyrin-IX biosynthesis; 5-aminolevulinate from L-glutamyl-tRNA(Glu): step 2/2. The chain is Glutamate-1-semialdehyde 2,1-aminomutase from Serratia proteamaculans (strain 568).